A 359-amino-acid polypeptide reads, in one-letter code: Methylthioribose-1-phosphate isomerase (359 aa).

Residues 52–54, arginine 90, and glutamine 200 each bind substrate; that span reads RGA. Aspartate 241 (proton donor) is an active-site residue. Substrate is bound at residue 251–252; sequence NK.

Belongs to the eIF-2B alpha/beta/delta subunits family. MtnA subfamily.

The enzyme catalyses 5-(methylsulfanyl)-alpha-D-ribose 1-phosphate = 5-(methylsulfanyl)-D-ribulose 1-phosphate. It functions in the pathway amino-acid biosynthesis; L-methionine biosynthesis via salvage pathway; L-methionine from S-methyl-5-thio-alpha-D-ribose 1-phosphate: step 1/6. Catalyzes the interconversion of methylthioribose-1-phosphate (MTR-1-P) into methylthioribulose-1-phosphate (MTRu-1-P). This chain is Methylthioribose-1-phosphate isomerase, found in Sulfurimonas denitrificans (strain ATCC 33889 / DSM 1251) (Thiomicrospira denitrificans (strain ATCC 33889 / DSM 1251)).